A 178-amino-acid polypeptide reads, in one-letter code: ATP synthase subunit delta (178 aa).

Belongs to the ATPase delta chain family. As to quaternary structure, F-type ATPases have 2 components, F(1) - the catalytic core - and F(0) - the membrane proton channel. F(1) has five subunits: alpha(3), beta(3), gamma(1), delta(1), epsilon(1). F(0) has three main subunits: a(1), b(2) and c(10-14). The alpha and beta chains form an alternating ring which encloses part of the gamma chain. F(1) is attached to F(0) by a central stalk formed by the gamma and epsilon chains, while a peripheral stalk is formed by the delta and b chains.

The protein localises to the cell inner membrane. Its function is as follows. F(1)F(0) ATP synthase produces ATP from ADP in the presence of a proton or sodium gradient. F-type ATPases consist of two structural domains, F(1) containing the extramembraneous catalytic core and F(0) containing the membrane proton channel, linked together by a central stalk and a peripheral stalk. During catalysis, ATP synthesis in the catalytic domain of F(1) is coupled via a rotary mechanism of the central stalk subunits to proton translocation. In terms of biological role, this protein is part of the stalk that links CF(0) to CF(1). It either transmits conformational changes from CF(0) to CF(1) or is implicated in proton conduction. The protein is ATP synthase subunit delta of Nitrosococcus oceani (strain ATCC 19707 / BCRC 17464 / JCM 30415 / NCIMB 11848 / C-107).